Here is a 1853-residue protein sequence, read N- to C-terminus: Cellulosomal-scaffolding protein A (1853 aa).

The first 28 residues, 1–28 (MRKVISMLLVVAMLTTIFAAMIPQTVSA), serve as a signal peptide directing secretion. Cohesin domains are found at residues 29–182 (ATMT…VPSD) and 183–322 (GVVV…VNVG). Linker (Pro/Thr-rich) stretches follow at residues 323–363 (NATP…PANT) and 523–559 (GGSV…SDDP). Low complexity predominate over residues 323–364 (NATPTKGATPTNTATPTKSATATPTRPSVPTNTPTNTPANTP). 2 disordered regions span residues 323-367 (NATP…PVSG) and 525-559 (SVVP…SDDP). One can recognise a CBM3 domain in the interval 365–523 (VSGNLKVEFY…GVLVWGKEPG (159 aa)). Over residues 525-555 (SVVPSTQPVTTPPATTKPPATTKPPATTIPP) the composition is skewed to low complexity. Cohesin domains are found at residues 560 to 704 (NAIK…NVGD), 724 to 866 (AVRI…VNVG), 889 to 1031 (AVRI…VNVG), 1054 to 1196 (AVRI…VNVG), 1219 to 1361 (AVRI…VNVG), 1384 to 1526 (AVRI…VNVG), and 1548 to 1690 (KLTL…VLVT). A Dockerin domain is found at 1785-1852 (IMMWVGDIVK…FGATSSDYDA (68 aa)).

Post-translationally, O-glycosylated on most but not all Thr residues of the linker units. The reducing sugar is galactopyranose.

It localises to the secreted. Acts as a scaffolding protein in the cellulosome. It promotes binding of cellulose to the catalytic domains of the cellulolytic enzymes. In Acetivibrio thermocellus (strain ATCC 27405 / DSM 1237 / JCM 9322 / NBRC 103400 / NCIMB 10682 / NRRL B-4536 / VPI 7372) (Clostridium thermocellum), this protein is Cellulosomal-scaffolding protein A (cipA).